Consider the following 422-residue polypeptide: Putative polyketide beta-ketoacyl synthase 1 (422 aa).

In terms of domain architecture, Ketosynthase family 3 (KS3) spans 2–416 (TRRVAVTGIG…GFQSAVLLTG (415 aa)). Catalysis depends on for beta-ketoacyl synthase activity residues cysteine 169, histidine 309, and histidine 346.

The protein belongs to the thiolase-like superfamily. Beta-ketoacyl-ACP synthases family.

It participates in antibiotic biosynthesis; curamycin biosynthesis. The protein is Putative polyketide beta-ketoacyl synthase 1 (curA) of Streptomyces cyaneus (Streptomyces curacoi).